Here is a 368-residue protein sequence, read N- to C-terminus: snRNA-activating protein complex subunit 1 (368 aa).

The segment at 1 to 168 (MGTPPGLQTD…EEFKDPSDRV (168 aa)) is SNAPC3-binding. The segment at 164–268 (PSDRVMKLIT…AESLAKIKSK (105 aa)) is SNAPC4-binding. Disordered regions lie at residues 224–257 (QQWH…ERCE) and 275–368 (QASK…RRKH). Positions 238-257 (KTNDGEEKMEGNSQETERCE) are enriched in basic and acidic residues. 2 positions are modified to phosphoserine: Ser-289 and Ser-290.

As to quaternary structure, part of the SNAPc complex composed of 5 subunits: SNAPC1, SNAPC2, SNAPC3, SNAPC4 and SNAPC5. SNAPC1 interacts with SNAPC3, SNAPC4 and TBP.

It is found in the nucleus. In terms of biological role, part of the SNAPc complex required for the transcription of both RNA polymerase II and III small-nuclear RNA genes. Binds to the proximal sequence element (PSE), a non-TATA-box basal promoter element common to these 2 types of genes. Recruits TBP and BRF2 to the U6 snRNA TATA box. In Homo sapiens (Human), this protein is snRNA-activating protein complex subunit 1 (SNAPC1).